The sequence spans 515 residues: Bifunctional purine biosynthesis protein PurH (515 aa).

An MGS-like domain is found at 1–145; sequence MTKRALISVS…KNHASVTVVV (145 aa).

Belongs to the PurH family.

It carries out the reaction (6R)-10-formyltetrahydrofolate + 5-amino-1-(5-phospho-beta-D-ribosyl)imidazole-4-carboxamide = 5-formamido-1-(5-phospho-D-ribosyl)imidazole-4-carboxamide + (6S)-5,6,7,8-tetrahydrofolate. The catalysed reaction is IMP + H2O = 5-formamido-1-(5-phospho-D-ribosyl)imidazole-4-carboxamide. Its pathway is purine metabolism; IMP biosynthesis via de novo pathway; 5-formamido-1-(5-phospho-D-ribosyl)imidazole-4-carboxamide from 5-amino-1-(5-phospho-D-ribosyl)imidazole-4-carboxamide (10-formyl THF route): step 1/1. It functions in the pathway purine metabolism; IMP biosynthesis via de novo pathway; IMP from 5-formamido-1-(5-phospho-D-ribosyl)imidazole-4-carboxamide: step 1/1. The sequence is that of Bifunctional purine biosynthesis protein PurH from Streptococcus pyogenes serotype M12 (strain MGAS2096).